The chain runs to 352 residues: Glycerol-3-phosphate dehydrogenase [NAD(P)+] (352 aa).

NADPH is bound by residues W11, R37, and K112. Sn-glycerol 3-phosphate is bound by residues K112, G153, and S155. A157 provides a ligand contact to NADPH. Sn-glycerol 3-phosphate is bound by residues K208, D261, S271, R272, and N273. Catalysis depends on K208, which acts as the Proton acceptor. R272 contributes to the NADPH binding site. NADPH is bound by residues V296 and E298.

It belongs to the NAD-dependent glycerol-3-phosphate dehydrogenase family.

It localises to the cytoplasm. It carries out the reaction sn-glycerol 3-phosphate + NAD(+) = dihydroxyacetone phosphate + NADH + H(+). The catalysed reaction is sn-glycerol 3-phosphate + NADP(+) = dihydroxyacetone phosphate + NADPH + H(+). The protein operates within membrane lipid metabolism; glycerophospholipid metabolism. Functionally, catalyzes the reduction of the glycolytic intermediate dihydroxyacetone phosphate (DHAP) to sn-glycerol 3-phosphate (G3P), the key precursor for phospholipid synthesis. This is Glycerol-3-phosphate dehydrogenase [NAD(P)+] from Polaromonas naphthalenivorans (strain CJ2).